A 622-amino-acid polypeptide reads, in one-letter code: WD repeat-containing protein 70 (622 aa).

Over residues 37 to 55 the composition is skewed to basic and acidic residues; sequence TAVERSKKTLEAREKEEQI. The disordered stretch occupies residues 37-141; that stretch reads TAVERSKKTL…DNPVKGIPDS (105 aa). Low complexity predominate over residues 67–84; it reads SSSRQKNTDTSSSSSGSE. Acidic residues predominate over residues 120-132; sequence SDDEDEEQHEDDD. 7 WD repeats span residues 148-187, 195-236, 249-289, 298-337, 344-383, 389-434, and 437-476; these read HGTK…ASLQ, CECH…ECVK, GHTA…KHKG, GKRV…HTKF, TPGT…NPLN, ANYF…KVYE, and VTEA…QRGA. Basic and acidic residues predominate over residues 508–533; it reads REPRQRSTRKQLEKDRLDPVKSHKPE. 2 disordered regions span residues 508–549 and 602–622; these read REPR…GTHG and AEVE…KRKI. Residues 539–549 are compositionally biased toward gly residues; the sequence is PGRGGRVGTHG. The span at 604 to 614 shows a compositional bias: acidic residues; it reads VESDEEETDNE.

It belongs to the WD repeat GAD-1 family.

This is WD repeat-containing protein 70 (wdr70) from Xenopus tropicalis (Western clawed frog).